A 691-amino-acid polypeptide reads, in one-letter code: Guanylate cyclase soluble subunit alpha-1 (691 aa).

Residues 26–65 (PREPLGEATGSGPASTPGQPGVCPGVPDKNPPGRLPRRKT) form a disordered region. The 128-residue stretch at 482–609 (TMLFSDIVGF…NNVTLANKFE (128 aa)) folds into the Guanylate cyclase domain.

Belongs to the adenylyl cyclase class-4/guanylyl cyclase family. In terms of assembly, heterodimer of an alpha and a beta chain.

The protein resides in the cytoplasm. It catalyses the reaction GTP = 3',5'-cyclic GMP + diphosphate. With respect to regulation, activated by nitric oxide in the presence of magnesium or manganese ions. The sequence is that of Guanylate cyclase soluble subunit alpha-1 (GUCY1A1) from Bos taurus (Bovine).